Reading from the N-terminus, the 414-residue chain is Gamma-glutamyl phosphate reductase (414 aa).

Belongs to the gamma-glutamyl phosphate reductase family.

The protein resides in the cytoplasm. The catalysed reaction is L-glutamate 5-semialdehyde + phosphate + NADP(+) = L-glutamyl 5-phosphate + NADPH + H(+). It participates in amino-acid biosynthesis; L-proline biosynthesis; L-glutamate 5-semialdehyde from L-glutamate: step 2/2. Functionally, catalyzes the NADPH-dependent reduction of L-glutamate 5-phosphate into L-glutamate 5-semialdehyde and phosphate. The product spontaneously undergoes cyclization to form 1-pyrroline-5-carboxylate. In Geobacillus thermodenitrificans (strain NG80-2), this protein is Gamma-glutamyl phosphate reductase.